Here is a 67-residue protein sequence, read N- to C-terminus: uncharacterized protein (67 aa).

A run of 2 helical transmembrane segments spans residues 6–26 and 38–58; these read GQLW…CVLM and NNII…IIII.

Its subcellular location is the membrane. This is an uncharacterized protein from Dictyostelium discoideum (Social amoeba).